The chain runs to 373 residues: NADPH-dependent 3-keto-steroid reductase Hsd3b5 (373 aa).

Residues 10–15 (GAGGFL), Tyr-155, and Lys-159 each bind NADP(+). The Proton donor role is filled by Lys-159. A helical membrane pass occupies residues 288 to 308 (LPLLYWLAFLLETVSFLLRPF). Lys-350 bears the N6-acetyllysine mark.

The protein belongs to the 3-beta-HSD family. In terms of tissue distribution, expressed predominantly in male liver.

It localises to the endoplasmic reticulum membrane. It is found in the mitochondrion membrane. It catalyses the reaction a 3beta-hydroxysteroid + NADP(+) = a 3-oxosteroid + NADPH + H(+). It carries out the reaction 5alpha-androstane-3beta,17beta-diol + NADP(+) = 17beta-hydroxy-5alpha-androstan-3-one + NADPH + H(+). The catalysed reaction is 3beta-hydroxy-5alpha-androstan-17-one + NADP(+) = 5alpha-androstan-3,17-dione + NADPH + H(+). The protein operates within steroid metabolism. Responsible for the reduction of the oxo group on the C-3 of 5alpha-androstane steroids. Catalyzes the conversion of dihydrotestosterone to its inactive form 5alpha-androstanediol, that does not bind androgen receptor/AR. Also converts androstanedione, a precursor of testosterone and estrone, to epiandrosterone. Does not function as an isomerase. The sequence is that of NADPH-dependent 3-keto-steroid reductase Hsd3b5 from Rattus norvegicus (Rat).